Here is a 350-residue protein sequence, read N- to C-terminus: MRLPDVQLWLVLLWALVRAQGTGSVCPSCGGSKLAPQAERALVLELAKQQILDGLHLTSRPRITHPPPQAALTRALRRLQPGSVAPGNGEEVISFATVTDSTSAYSSLLTFHLSTPRSHHLYHARLWLHVLPTLPGTLCLRIFRWGPRRRRQGSRTLLAEHHITNLGWHTLTLPSSGLRGEKSGVLKLQLDCRPLEGNSTVTGQPRRLLDTAGHQQPFLELKIRANEPGAGRARRRTPTCEPATPLCCRRDHYVDFQELGWRDWILQPEGYQLNYCSGQCPPHLAGSPGIAASFHSAVFSLLKANNPWPASTSCCVPTARRPLSLLYLDHNGNVVKTDVPDMVVEACGCS.

A signal peptide spans 1–19 (MRLPDVQLWLVLLWALVRA). Residues 20–236 (QGTGSVCPSC…EPGAGRARRR (217 aa)) constitute a propeptide that is removed on maturation. N-linked (GlcNAc...) asparagine glycosylation occurs at N198. Disulfide bonds link C240–C248, C247–C315, C276–C347, and C280–C349.

Belongs to the TGF-beta family. As to quaternary structure, homodimeric or heterodimeric through association with alpha and beta subunits, linked by one or more disulfide bonds. Inhibins are heterodimers of one alpha and one beta subunit. Activins are homo- or heterodimers of beta subunits only.

It is found in the secreted. In terms of biological role, inhibins and activins inhibit and activate, respectively, the secretion of follitropin by the pituitary gland. Inhibins/activins are involved in regulating a number of diverse functions such as hypothalamic and pituitary hormone secretion, gonadal hormone secretion, germ cell development and maturation, erythroid differentiation, insulin secretion, nerve cell survival, embryonic axial development or bone growth, depending on their subunit composition. Inhibins appear to oppose the functions of activins. Its function is as follows. Activin E is a homodimer of INHBE secreted by the liver that plays a crucial role in regulating metabolic homeostasis particularly in lipid metabolism and energy homeostasis. Plays a central role in the regulation of adipose tissue lipolysis by preventing the influx of fatty acids from adipose tissue into the liver. Mechanistically, signals via ACVR1C to activate SMAD2/3 signaling, suppressing PPARG target genes in adipose tissue, thereby reducing liver lipid content and improving glycemic control. Induces beige adipocyte formation and thermogenesis in response to cold exposure. The chain is Inhibin beta E chain (INHBE) from Homo sapiens (Human).